The primary structure comprises 68 residues: ATP-dependent 6-phosphofructokinase (68 aa).

17–20 is a binding site for ATP; sequence GDGT. Asp-18 is a binding site for Mg(2+). Asp-48 functions as the Proton acceptor in the catalytic mechanism.

Belongs to the phosphofructokinase type A (PFKA) family. PPi-dependent PFK group II subfamily. Atypical ATP-dependent clade 'X' sub-subfamily. As to quaternary structure, homotetramer. Mg(2+) serves as cofactor.

The protein resides in the cytoplasm. The enzyme catalyses beta-D-fructose 6-phosphate + ATP = beta-D-fructose 1,6-bisphosphate + ADP + H(+). The protein operates within carbohydrate degradation; glycolysis; D-glyceraldehyde 3-phosphate and glycerone phosphate from D-glucose: step 3/4. With respect to regulation, allosterically activated by AMP. In terms of biological role, catalyzes the phosphorylation of D-fructose 6-phosphate to fructose 1,6-bisphosphate by ATP, the first committing step of glycolysis. This Triticum aestivum (Wheat) protein is ATP-dependent 6-phosphofructokinase (PFK).